Consider the following 303-residue polypeptide: Tyrosine-protein phosphatase 3 (303 aa).

In terms of domain architecture, Tyrosine-protein phosphatase spans 24–292; that stretch reads YMIIEGLNEE…VFLYTVSQEL (269 aa). Cysteine 227 (phosphocysteine intermediate) is an active-site residue.

This sequence belongs to the protein-tyrosine phosphatase family. Non-receptor class subfamily.

The protein localises to the cytoplasm. It catalyses the reaction O-phospho-L-tyrosyl-[protein] + H2O = L-tyrosyl-[protein] + phosphate. Its function is as follows. Contributes to dephosphorylation of tyrosine 15 of cdc2. In Schizosaccharomyces pombe (strain 972 / ATCC 24843) (Fission yeast), this protein is Tyrosine-protein phosphatase 3 (pyp3).